Consider the following 391-residue polypeptide: Transaldolase (391 aa).

The active-site Schiff-base intermediate with substrate is the Lys-134. EF-hand domains lie at 329 to 364 (TLTH…FDAL) and 365 to 387 (DANH…VLHL). 9 residues coordinate Ca(2+): Asp-342, Asp-344, Asp-346, Glu-353, Asp-365, Asn-367, Asp-369, Lys-371, and Asp-376.

This sequence belongs to the transaldolase family. Type 1 subfamily.

The protein resides in the cytoplasm. The enzyme catalyses D-sedoheptulose 7-phosphate + D-glyceraldehyde 3-phosphate = D-erythrose 4-phosphate + beta-D-fructose 6-phosphate. It functions in the pathway carbohydrate degradation; pentose phosphate pathway; D-glyceraldehyde 3-phosphate and beta-D-fructose 6-phosphate from D-ribose 5-phosphate and D-xylulose 5-phosphate (non-oxidative stage): step 2/3. Its function is as follows. Transaldolase is important for the balance of metabolites in the pentose-phosphate pathway. The protein is Transaldolase of Thermosynechococcus vestitus (strain NIES-2133 / IAM M-273 / BP-1).